The primary structure comprises 512 residues: Solute carrier family 2, facilitated glucose transporter member 7 (512 aa).

The Cytoplasmic portion of the chain corresponds to 1-21; sequence MENKEAGTPPPIPSREGRLQP. Residues 22–42 form a helical membrane-spanning segment; the sequence is TLLLATLSAAFGSAFQYGYNL. Over 43–78 the chain is Extracellular; the sequence is SVVNTPHKVFKSFYNETYFERHATFMDGKLMLLLWS. The N-linked (GlcNAc...) asparagine glycan is linked to Asn57. A helical transmembrane segment spans residues 79 to 99; the sequence is CTVSMFPLGGLLGSLLVGLLV. Residues 100 to 107 are Cytoplasmic-facing; sequence DSCGRKGT. Residues 108-128 form a helical membrane-spanning segment; that stretch reads LLINNIFAIIPAILMGVSKVA. At 129–138 the chain is on the extracellular side; the sequence is KAFELIVFSR. A helical transmembrane segment spans residues 139–159; sequence VVLGVCAGISYSALPMYLGEL. Topologically, residues 160 to 172 are cytoplasmic; it reads APKNLRGMVGTMT. A helical membrane pass occupies residues 173–193; it reads EVFVIVGVFLAQIFSLQAILG. Residues 194-198 are Extracellular-facing; that stretch reads NPAGW. The helical transmembrane segment at 199-219 threads the bilayer; sequence PVLLALTGVPALLQLLTLPFF. Residues 220–281 lie on the Cytoplasmic side of the membrane; that stretch reads PESPRYSLIQ…LHLCALRSLR (62 aa). A helical membrane pass occupies residues 282–302; that stretch reads WQLLSIIVLMAGQQLSGINAI. D-glucose contacts are provided by residues 294 to 295 and Asn300; that span reads QQ. Topologically, residues 303 to 321 are extracellular; that stretch reads NYYADTIYTSAGVEAAHSQ. The helical transmembrane segment at 322–342 threads the bilayer; that stretch reads YVTVGSGVVNIVMTITSAVLV. Asn331 serves as a coordination point for D-glucose. At 343–350 the chain is on the cytoplasmic side; that stretch reads ERLGRRHL. A helical membrane pass occupies residues 351–371; that stretch reads LLAGYGICGSACLVLTVVLLF. Residues 372–379 lie on the Extracellular side of the membrane; it reads QNRVPELS. A helical transmembrane segment spans residues 380–400; that stretch reads YLGIICVFAYIAGHSIGPSPV. Topologically, residues 401 to 415 are cytoplasmic; sequence PSVVRTEIFLQSSRR. The chain crosses the membrane as a helical span at residues 416 to 436; sequence AAFMVDGAVHWLTNFIIGFLF. The Extracellular portion of the chain corresponds to 437-445; it reads PSIQEAIGA. The chain crosses the membrane as a helical span at residues 446–466; sequence YSFIIFAGICLLTAIYIYVVI. The Cytoplasmic portion of the chain corresponds to 467 to 512; the sequence is PETKGKTFVEINRIFAKRNRVKLPEEKEETIDAGPPTASPAKETSF. Positions 491 to 512 are disordered; sequence EEKEETIDAGPPTASPAKETSF.

The protein belongs to the major facilitator superfamily. Sugar transporter (TC 2.A.1.1) family. Glucose transporter subfamily. As to expression, expressed in small intestine and colon. Weakly expressed in testis and prostate.

The protein localises to the cell membrane. It localises to the apical cell membrane. The catalysed reaction is D-glucose(out) = D-glucose(in). It carries out the reaction D-fructose(out) = D-fructose(in). Glucose and fructose transport are inhibited by the flavonoid apigenin. Its function is as follows. Probable sugar transporter. Even if its physiological substrate is subject to discussion, it is able to transport glucose and fructose. Does not transport galactose, 2-deoxy-d-glucose and xylose. In Homo sapiens (Human), this protein is Solute carrier family 2, facilitated glucose transporter member 7.